The sequence spans 318 residues: Transaldolase (318 aa).

Lys132 (schiff-base intermediate with substrate) is an active-site residue.

Belongs to the transaldolase family. Type 1 subfamily. In terms of assembly, homodimer.

It localises to the cytoplasm. It carries out the reaction D-sedoheptulose 7-phosphate + D-glyceraldehyde 3-phosphate = D-erythrose 4-phosphate + beta-D-fructose 6-phosphate. It functions in the pathway carbohydrate degradation; pentose phosphate pathway; D-glyceraldehyde 3-phosphate and beta-D-fructose 6-phosphate from D-ribose 5-phosphate and D-xylulose 5-phosphate (non-oxidative stage): step 2/3. Its function is as follows. Transaldolase is important for the balance of metabolites in the pentose-phosphate pathway. This is Transaldolase from Shewanella piezotolerans (strain WP3 / JCM 13877).